We begin with the raw amino-acid sequence, 161 residues long: Small ribosomal subunit protein uS9 (161 aa).

A compositionally biased stretch (polar residues) spans 1 to 21 (MATLQSLADLNRANTQTSNPE). The segment at 1–25 (MATLQSLADLNRANTQTSNPENEAP) is disordered.

Belongs to the universal ribosomal protein uS9 family.

The sequence is that of Small ribosomal subunit protein uS9 from Methylorubrum populi (strain ATCC BAA-705 / NCIMB 13946 / BJ001) (Methylobacterium populi).